A 238-amino-acid polypeptide reads, in one-letter code: MTPDEFLSALTEFDIQLSDKQIKQFERYFELLVEWNEKINLTAITEKNEVYLKHFYDSVAPILYGLITDQPVSILDIGAGAGFPSLPMKIIFPELEVTIIDSLNKRINFLSLLTEELGLENVTLLHGRAEDFGQDSNYRATFDFVTARAVARLSVLSEFTISFLKKNGNLLSLKAAQFEEELTDAKKAIAILGGKFIKEIAYELPNGDERHIAVIEKKKETPKKYPRKAGTPAKSPIK.

S-adenosyl-L-methionine-binding positions include G78, F83, 129–130 (AE), and R148. Positions 217 to 238 (KKKETPKKYPRKAGTPAKSPIK) are disordered.

This sequence belongs to the methyltransferase superfamily. RNA methyltransferase RsmG family.

It localises to the cytoplasm. Specifically methylates the N7 position of a guanine in 16S rRNA. The sequence is that of Ribosomal RNA small subunit methyltransferase G from Lactococcus lactis subsp. cremoris (strain SK11).